A 446-amino-acid polypeptide reads, in one-letter code: Tol-Pal system protein TolB (446 aa).

Residues 1-24 form the signal peptide; the sequence is MKRAFLSALSVGLAALFLTGPAQA.

This sequence belongs to the TolB family. As to quaternary structure, the Tol-Pal system is composed of five core proteins: the inner membrane proteins TolA, TolQ and TolR, the periplasmic protein TolB and the outer membrane protein Pal. They form a network linking the inner and outer membranes and the peptidoglycan layer.

It localises to the periplasm. In terms of biological role, part of the Tol-Pal system, which plays a role in outer membrane invagination during cell division and is important for maintaining outer membrane integrity. This Dinoroseobacter shibae (strain DSM 16493 / NCIMB 14021 / DFL 12) protein is Tol-Pal system protein TolB.